A 215-amino-acid chain; its full sequence is Small ribosomal subunit protein uS5 (215 aa).

The disordered stretch occupies residues 1 to 62; that stretch reads MTDSSPQSNP…QERDSEWQER (62 aa). The segment covering 9–28 has biased composition (low complexity); it reads NPNAVPGAADVPAAAEGQQQ. Residues 29–61 show a composition bias toward basic and acidic residues; the sequence is EQRRGGGRGERGDRRGGRRGDRRNQERDSEWQE. The 64-residue stretch at 59–122 folds into the S5 DRBM domain; sequence WQERVVQIRR…ADGKKHLVKV (64 aa).

The protein belongs to the universal ribosomal protein uS5 family. In terms of assembly, part of the 30S ribosomal subunit. Contacts proteins S4 and S8.

In terms of biological role, with S4 and S12 plays an important role in translational accuracy. Its function is as follows. Located at the back of the 30S subunit body where it stabilizes the conformation of the head with respect to the body. This is Small ribosomal subunit protein uS5 from Parasynechococcus marenigrum (strain WH8102).